Here is a 434-residue protein sequence, read N- to C-terminus: Homogentisate 1,2-dioxygenase (434 aa).

The active-site Proton acceptor is the His-289. Positions 332 and 338 each coordinate Fe cation. 2 residues coordinate homogentisate: Tyr-347 and His-368. Position 368 (His-368) interacts with Fe cation.

It belongs to the homogentisate dioxygenase family. In terms of assembly, hexamer; dimer of trimers. Requires Fe cation as cofactor.

The catalysed reaction is homogentisate + O2 = 4-maleylacetoacetate + H(+). It functions in the pathway amino-acid degradation; L-phenylalanine degradation; acetoacetate and fumarate from L-phenylalanine: step 4/6. Involved in the catabolism of homogentisate (2,5-dihydroxyphenylacetate or 2,5-OH-PhAc), a central intermediate in the degradation of phenylalanine and tyrosine. Catalyzes the oxidative ring cleavage of the aromatic ring of homogentisate to yield maleylacetoacetate. This chain is Homogentisate 1,2-dioxygenase, found in Pseudomonas syringae pv. syringae (strain B728a).